The sequence spans 140 residues: Peptide methionine sulfoxide reductase MsrB (140 aa).

The region spanning 9–131 (DALWREKLTP…NSASIVLDSE (123 aa)) is the MsrB domain. Zn(2+) contacts are provided by Cys48, Cys51, Cys97, and Cys100. Cys120 acts as the Nucleophile in catalysis.

This sequence belongs to the MsrB Met sulfoxide reductase family. It depends on Zn(2+) as a cofactor.

It catalyses the reaction L-methionyl-[protein] + [thioredoxin]-disulfide + H2O = L-methionyl-(R)-S-oxide-[protein] + [thioredoxin]-dithiol. The polypeptide is Peptide methionine sulfoxide reductase MsrB (Cellvibrio japonicus (strain Ueda107) (Pseudomonas fluorescens subsp. cellulosa)).